The primary structure comprises 227 residues: Cytochrome c oxidase subunit 2 (227 aa).

The Mitochondrial intermembrane segment spans residues 1–14; that stretch reads MANHSQLGFQDASS. Residues 15–45 traverse the membrane as a helical segment; that stretch reads PIMEELVEFHDHALMVALAICSLVLYLLTLM. The Mitochondrial matrix segment spans residues 46–58; sequence LTQKLSSNTVDAQ. Residues 59 to 86 traverse the membrane as a helical segment; sequence EVELIWTILPAIVLVLLALPSLQILYMM. Residues 87–227 are Mitochondrial intermembrane-facing; sequence DEIEEPDLTL…FETWSSLLSS (141 aa). Cu cation-binding residues include His160, Cys195, Glu197, Cys199, His203, and Met206. Residue Glu197 participates in Mg(2+) binding.

Belongs to the cytochrome c oxidase subunit 2 family. Component of the cytochrome c oxidase (complex IV, CIV), a multisubunit enzyme composed of 14 subunits. The complex is composed of a catalytic core of 3 subunits MT-CO1, MT-CO2 and MT-CO3, encoded in the mitochondrial DNA, and 11 supernumerary subunits COX4I, COX5A, COX5B, COX6A, COX6B, COX6C, COX7A, COX7B, COX7C, COX8 and NDUFA4, which are encoded in the nuclear genome. The complex exists as a monomer or a dimer and forms supercomplexes (SCs) in the inner mitochondrial membrane with NADH-ubiquinone oxidoreductase (complex I, CI) and ubiquinol-cytochrome c oxidoreductase (cytochrome b-c1 complex, complex III, CIII), resulting in different assemblies (supercomplex SCI(1)III(2)IV(1) and megacomplex MCI(2)III(2)IV(2)). Found in a complex with TMEM177, COA6, COX18, COX20, SCO1 and SCO2. Interacts with TMEM177 in a COX20-dependent manner. Interacts with COX20. Interacts with COX16. Cu cation serves as cofactor.

The protein resides in the mitochondrion inner membrane. The enzyme catalyses 4 Fe(II)-[cytochrome c] + O2 + 8 H(+)(in) = 4 Fe(III)-[cytochrome c] + 2 H2O + 4 H(+)(out). Functionally, component of the cytochrome c oxidase, the last enzyme in the mitochondrial electron transport chain which drives oxidative phosphorylation. The respiratory chain contains 3 multisubunit complexes succinate dehydrogenase (complex II, CII), ubiquinol-cytochrome c oxidoreductase (cytochrome b-c1 complex, complex III, CIII) and cytochrome c oxidase (complex IV, CIV), that cooperate to transfer electrons derived from NADH and succinate to molecular oxygen, creating an electrochemical gradient over the inner membrane that drives transmembrane transport and the ATP synthase. Cytochrome c oxidase is the component of the respiratory chain that catalyzes the reduction of oxygen to water. Electrons originating from reduced cytochrome c in the intermembrane space (IMS) are transferred via the dinuclear copper A center (CU(A)) of subunit 2 and heme A of subunit 1 to the active site in subunit 1, a binuclear center (BNC) formed by heme A3 and copper B (CU(B)). The BNC reduces molecular oxygen to 2 water molecules using 4 electrons from cytochrome c in the IMS and 4 protons from the mitochondrial matrix. This is Cytochrome c oxidase subunit 2 (MT-CO2) from Coturnix japonica (Japanese quail).